The following is a 112-amino-acid chain: Nitrogenase-stabilizing/protective protein NifW (112 aa).

This sequence belongs to the NifW family. As to quaternary structure, homotrimer; associates with NifD.

In terms of biological role, may protect the nitrogenase Fe-Mo protein from oxidative damage. This chain is Nitrogenase-stabilizing/protective protein NifW, found in Burkholderia vietnamiensis (strain G4 / LMG 22486) (Burkholderia cepacia (strain R1808)).